Consider the following 426-residue polypeptide: 3-phosphoshikimate 1-carboxyvinyltransferase (426 aa).

Residues K21, S22, and R26 each coordinate 3-phosphoshikimate. K21 is a binding site for phosphoenolpyruvate. Phosphoenolpyruvate contacts are provided by G91 and R119. 3-phosphoshikimate is bound by residues S162, S163, Q164, S190, D304, and K331. Q164 lines the phosphoenolpyruvate pocket. D304 (proton acceptor) is an active-site residue. Residues R335, R377, and K403 each coordinate phosphoenolpyruvate.

This sequence belongs to the EPSP synthase family. As to quaternary structure, monomer.

The protein localises to the cytoplasm. It carries out the reaction 3-phosphoshikimate + phosphoenolpyruvate = 5-O-(1-carboxyvinyl)-3-phosphoshikimate + phosphate. It functions in the pathway metabolic intermediate biosynthesis; chorismate biosynthesis; chorismate from D-erythrose 4-phosphate and phosphoenolpyruvate: step 6/7. In terms of biological role, catalyzes the transfer of the enolpyruvyl moiety of phosphoenolpyruvate (PEP) to the 5-hydroxyl of shikimate-3-phosphate (S3P) to produce enolpyruvyl shikimate-3-phosphate and inorganic phosphate. The chain is 3-phosphoshikimate 1-carboxyvinyltransferase from Clostridium kluyveri (strain ATCC 8527 / DSM 555 / NBRC 12016 / NCIMB 10680 / K1).